Reading from the N-terminus, the 320-residue chain is ATP synthase gamma chain (320 aa).

It belongs to the ATPase gamma chain family. F-type ATPases have 2 components, CF(1) - the catalytic core - and CF(0) - the membrane proton channel. CF(1) has five subunits: alpha(3), beta(3), gamma(1), delta(1), epsilon(1). CF(0) has three main subunits: a, b and c.

The protein resides in the cell membrane. In terms of biological role, produces ATP from ADP in the presence of a proton gradient across the membrane. The gamma chain is believed to be important in regulating ATPase activity and the flow of protons through the CF(0) complex. The sequence is that of ATP synthase gamma chain from Lactobacillus helveticus (strain DPC 4571).